The primary structure comprises 727 residues: NADH-ubiquinone oxidoreductase 75 kDa subunit, mitochondrial (727 aa).

Residues 1-23 (MLRIPIKRALIGLSNSPKGYVRT) constitute a mitochondrion transit peptide. The 2Fe-2S ferredoxin-type domain maps to 30–108 (NLIEVFVDGQ…GWNILTNSEK (79 aa)). Positions 64, 75, and 78 each coordinate [2Fe-2S] cluster. Lysine 84 carries the N6-acetyllysine modification. Cysteine 92 lines the [2Fe-2S] cluster pocket. The 4Fe-4S His(Cys)3-ligated-type domain maps to 108–147 (KSKKAREGVMEFLLANHPLDCPICDQGGECDLQDQSMMFG). [4Fe-4S] cluster-binding residues include histidine 124, cysteine 128, cysteine 131, cysteine 137, cysteine 176, cysteine 179, cysteine 182, and cysteine 226. Residues 245 to 301 (TRKTESIDVMDAVGSNIVVSTRTGEVMRILPRMHEDINEEWISDKTRFAYDGLKRQR) form the 4Fe-4S Mo/W bis-MGD-type domain. Serine 461 carries the phosphoserine modification. N6-acetyllysine occurs at positions 467, 499, and 709.

This sequence belongs to the complex I 75 kDa subunit family. In terms of assembly, core subunit of respiratory chain NADH dehydrogenase (Complex I) which is composed of 45 different subunits. This is the largest subunit of complex I and it is a component of the iron-sulfur (IP) fragment of the enzyme. Complex I associates with ubiquinol-cytochrome reductase complex (Complex III) to form supercomplexes. In astrocytes, less complex I is assembled into supercomplexes as compared to neurons. Interacts with MDM2. Interacts with AKAP1. [2Fe-2S] cluster serves as cofactor. The cofactor is [4Fe-4S] cluster. In terms of processing, acetylation of Lys-84 is observed in liver mitochondria from fasted mice but not from fed mice. In terms of tissue distribution, brain. More abundant in neurons than in astrocytes (at protein level).

The protein resides in the mitochondrion inner membrane. The catalysed reaction is a ubiquinone + NADH + 5 H(+)(in) = a ubiquinol + NAD(+) + 4 H(+)(out). Its function is as follows. Core subunit of the mitochondrial membrane respiratory chain NADH dehydrogenase (Complex I) which catalyzes electron transfer from NADH through the respiratory chain, using ubiquinone as an electron acceptor. Essential for catalysing the entry and efficient transfer of electrons within complex I. Plays a key role in the assembly and stability of complex I and participates in the association of complex I with ubiquinol-cytochrome reductase complex (Complex III) to form supercomplexes. The chain is NADH-ubiquinone oxidoreductase 75 kDa subunit, mitochondrial (Ndufs1) from Mus musculus (Mouse).